The following is a 186-amino-acid chain: Ribosome-recycling factor (186 aa).

Belongs to the RRF family.

It localises to the cytoplasm. Responsible for the release of ribosomes from messenger RNA at the termination of protein biosynthesis. May increase the efficiency of translation by recycling ribosomes from one round of translation to another. In Amoebophilus asiaticus (strain 5a2), this protein is Ribosome-recycling factor.